The primary structure comprises 239 residues: MGQKVNPIGLRLGINRTWDSRWFAGKNEYGKLLHEDMAIRAALMKTLKQAAVSKIIIERPHKKCRVTIHSARPGVVIGKKGADIDKIRKLVAKMTDSEVLINIVEVRKPEIDATLVADSIAQQLERRVAFRRAMKRAVQSAMRLGAEGIRINCSGRLGGAEIARLEWYREGRVPLHTLRADVDYGTATAHTAYGACGIKVWIFKGEILEHDPMAQDKKMAEQDHGGGGGDRRRRDRDAA.

The KH type-2 domain maps to 39 to 107; the sequence is IRAALMKTLK…EVLINIVEVR (69 aa). A disordered region spans residues 214-239; that stretch reads AQDKKMAEQDHGGGGGDRRRRDRDAA.

It belongs to the universal ribosomal protein uS3 family. Part of the 30S ribosomal subunit. Forms a tight complex with proteins S10 and S14.

Functionally, binds the lower part of the 30S subunit head. Binds mRNA in the 70S ribosome, positioning it for translation. The polypeptide is Small ribosomal subunit protein uS3 (Methylocella silvestris (strain DSM 15510 / CIP 108128 / LMG 27833 / NCIMB 13906 / BL2)).